A 224-amino-acid chain; its full sequence is UPF0758 protein CJA_3522 (224 aa).

One can recognise an MPN domain in the interval 102–224 (LLSSPHLVRD…LVSLAERGWL (123 aa)). 3 residues coordinate Zn(2+): His-173, His-175, and Asp-186. The JAMM motif motif lies at 173-186 (HNHPSGLAEPSQAD).

This sequence belongs to the UPF0758 family.

This is UPF0758 protein CJA_3522 from Cellvibrio japonicus (strain Ueda107) (Pseudomonas fluorescens subsp. cellulosa).